The chain runs to 907 residues: MCDQRPNLLGSLVLLGFFIFFVNGEECSNSSSLIGHESEFKMLQHQLRGVFTVVDDCSFRVSRFDMLSGSEVHWWGAMSSDFDNMTNDGFVISDQKLNQTFKNSSFIVRLLGNVTWDKLGVVSVWDLPTASDFGHVLLSNATESDTSKAESPPSESNDVAPGKSNNSEPFKAPTMFDNCKKLSDKYRLRWSLNAEKGYVDIGLEATTGLLNYMAFGWAKPNSTSNLMLNADVVVTGIREDGFPFADDFYITESSVCSVKEGTATGVCPDTVYEEADSVGSSVNNTKLVYGHRIDGVSFVRYRRPLNDSDNKFDFPVNSTESLTVIWALGVIKPPDVINPYYLPVNHGGVESENFGHFSLNLSDHVDECLGPLDADNKYDQDVIIADAHAPLVVTAGPSVHYPNPPNPSKVLYINKKEAPVLKVERGVPVKFSIEAGHDVSFYITSDFLGGNASLRNRTETIYAGGQETHGVLSSPSELVWAPNRNTPDQLYYHSIFQEKMGWKVQVVDGGLSDMYNNSVNLDDQQVKFFWTIVGDSISIAARGEKKSGYLAIGFGSEMTNSYAYIGWFDRNGTGHVNTYWIDGESASAVHPTTENMTYVRCKSEEGIITLEFTRPLKPSCSHRDRPECKNMIDPTTPLKVIWAMGAKWTDGQLTERNMHSVTSQRPVRVMLTRGSAEADQDLRPVLGVHGFMMFLAWGILLPGGILSARYLKHIKGDGWFKIHMYLQCSGLAIVFLGLLFAVAELNGFSFSSTHVKFGFTAIVLACAQPVNAWLRPAKPAQGELISSKRLIWEYSHSIVGQSAVVVGVVALFTGMKHLGERNGTENVDGLNLALGLWVFLCVVTVAYLEYRERGRRRARNLSRGNWVLGNVEEDDSIDLIDSRGGFRDKDDEDRNGGRMEIQLEPLK.

A signal peptide spans 1–24 (MCDQRPNLLGSLVLLGFFIFFVNG). In terms of domain architecture, DM13 spans 31–139 (SSLIGHESEF…ASDFGHVLLS (109 aa)). The interval 144-172 (SDTSKAESPPSESNDVAPGKSNNSEPFKA) is disordered. The segment covering 153 to 168 (PSESNDVAPGKSNNSE) has biased composition (polar residues). 2 DOMON domains span residues 184–329 (DKYR…WALG) and 524–645 (QQVK…WAMG). The 198-residue stretch at 653–850 (LTERNMHSVT…CVVTVAYLEY (198 aa)) folds into the Cytochrome b561 domain. The chain crosses the membrane as a helical span at residues 685–705 (VLGVHGFMMFLAWGILLPGGI). Heme b-binding residues include His-689 and His-723. 4 helical membrane-spanning segments follow: residues 730-750 (GLAI…GFSF), 754-774 (HVKF…NAWL), 795-815 (SHSI…FTGM), and 829-849 (GLNL…AYLE). Heme b contacts are provided by His-754 and His-796. Residues 884–897 (GGFRDKDDEDRNGG) are compositionally biased toward basic and acidic residues. The disordered stretch occupies residues 884-907 (GGFRDKDDEDRNGGRMEIQLEPLK).

Requires heme b as cofactor.

The protein localises to the membrane. May act as a catecholamine-responsive trans-membrane electron transporter. This chain is Cytochrome b561, DM13 and DOMON domain-containing protein At5g54830, found in Arabidopsis thaliana (Mouse-ear cress).